We begin with the raw amino-acid sequence, 459 residues long: tRNA(Ile2) 2-agmatinylcytidine synthetase TiaS (459 aa).

A DNA-binding region (OB) is located at residues 282-360 (VRVRVWVASI…TINLEKLHII (79 aa)).

It belongs to the TiaS family.

It is found in the cytoplasm. It carries out the reaction cytidine(34) in tRNA(Ile2) + agmatine + ATP + H2O = 2-agmatinylcytidine(34) in tRNA(Ile2) + AMP + 2 phosphate + 2 H(+). Its function is as follows. ATP-dependent agmatine transferase that catalyzes the formation of 2-agmatinylcytidine (agm2C) at the wobble position (C34) of tRNA(Ile2), converting the codon specificity from AUG to AUA. This is tRNA(Ile2) 2-agmatinylcytidine synthetase TiaS from Staphylothermus marinus (strain ATCC 43588 / DSM 3639 / JCM 9404 / F1).